Reading from the N-terminus, the 192-residue chain is Holliday junction branch migration complex subunit RuvA (192 aa).

Positions 1–64 (MLGRLTGLLA…EDAQVLFGFL (64 aa)) are domain I. Residues 65-139 (TAPERETFRM…GKLGADLGPA (75 aa)) are domain II. The interval 139–143 (AIGGK) is flexible linker. A domain III region spans residues 144–192 (PASDAQADILQALIALGYSEREAQAAVKALPAEVGVSDGIKLALKALAR).

The protein belongs to the RuvA family. As to quaternary structure, homotetramer. Forms an RuvA(8)-RuvB(12)-Holliday junction (HJ) complex. HJ DNA is sandwiched between 2 RuvA tetramers; dsDNA enters through RuvA and exits via RuvB. An RuvB hexamer assembles on each DNA strand where it exits the tetramer. Each RuvB hexamer is contacted by two RuvA subunits (via domain III) on 2 adjacent RuvB subunits; this complex drives branch migration. In the full resolvosome a probable DNA-RuvA(4)-RuvB(12)-RuvC(2) complex forms which resolves the HJ.

The protein resides in the cytoplasm. The RuvA-RuvB-RuvC complex processes Holliday junction (HJ) DNA during genetic recombination and DNA repair, while the RuvA-RuvB complex plays an important role in the rescue of blocked DNA replication forks via replication fork reversal (RFR). RuvA specifically binds to HJ cruciform DNA, conferring on it an open structure. The RuvB hexamer acts as an ATP-dependent pump, pulling dsDNA into and through the RuvAB complex. HJ branch migration allows RuvC to scan DNA until it finds its consensus sequence, where it cleaves and resolves the cruciform DNA. This is Holliday junction branch migration complex subunit RuvA from Methylibium petroleiphilum (strain ATCC BAA-1232 / LMG 22953 / PM1).